Consider the following 435-residue polypeptide: Serine/threonine-protein kinase ssn3 (435 aa).

Positions Y49–F377 constitute a Protein kinase domain. ATP-binding positions include I55–V63 and K79. The active-site Proton acceptor is the D181. The segment covering R398 to I407 has biased composition (basic and acidic residues). The disordered stretch occupies residues R398–E435.

Belongs to the protein kinase superfamily. CMGC Ser/Thr protein kinase family. CDC2/CDKX subfamily. Component of the srb8-11 complex, a regulatory module of the Mediator complex. Mg(2+) serves as cofactor.

It localises to the nucleus. The enzyme catalyses L-seryl-[protein] + ATP = O-phospho-L-seryl-[protein] + ADP + H(+). It catalyses the reaction L-threonyl-[protein] + ATP = O-phospho-L-threonyl-[protein] + ADP + H(+). It carries out the reaction [DNA-directed RNA polymerase] + ATP = phospho-[DNA-directed RNA polymerase] + ADP + H(+). In terms of biological role, component of the srb8-11 complex. The srb8-11 complex is a regulatory module of the Mediator complex which is itself involved in regulation of basal and activated RNA polymerase II-dependent transcription. The srb8-11 complex may be involved in the transcriptional repression of a subset of genes regulated by Mediator. It may inhibit the association of the Mediator complex with RNA polymerase II to form the holoenzyme complex. The srb8-11 complex phosphorylates the C-terminal domain (CTD) of the largest subunit of RNA polymerase II. This chain is Serine/threonine-protein kinase ssn3 (ssn3), found in Aspergillus terreus (strain NIH 2624 / FGSC A1156).